The chain runs to 117 residues: uncharacterized protein (117 aa).

Residues 5–50 are a coiled coil; sequence DKIHNTNEQITALEKKKYQIETTLLEKQRDLLKLETQQNKAKLELL.

This is an uncharacterized protein from Bacillus pumilus (Bacillus mesentericus).